An 837-amino-acid polypeptide reads, in one-letter code: A disintegrin and metalloproteinase with thrombospondin motifs 4 (837 aa).

Positions 1 to 51 (MSQTGSHPGRGLAGRWLWGAQPCLLLPIVPLSWLVWLLLLLLASLLPSARL) are cleaved as a signal peptide. Positions 52-212 (ASPLPREEEI…PSPRPRRAKR (161 aa)) are excised as a propeptide. Residue N68 is glycosylated (N-linked (GlcNAc...) asparagine). Residues 166-191 (EGGTPNSAGGPGAHILRRKSPASGQG) form a disordered region. Positions 192–199 (PMCNVKAP) match the Cysteine switch motif. C194 provides a ligand contact to Zn(2+). One can recognise a Peptidase M12B domain in the interval 218-428 (RFVETLVVAD…GYGHCLLDKP (211 aa)). Intrachain disulfides connect C293/C345, C322/C327, C339/C423, C377/C407, C449/C472, C460/C482, C467/C501, C495/C506, C532/C569, C536/C574, and C547/C559. H361 lines the Zn(2+) pocket. Residue E362 is part of the active site. Zn(2+)-binding residues include H365 and H371. Residues 437-519 (TFPGKDYDAD…DQLQDFNIPQ (83 aa)) form the Disintegrin domain. The TSP type-1 domain occupies 520-575 (AGGWGPWGPWGDCSRTCGGGVQFSSRDCTRPVPRNGGKYCEGRRTRFRSCNTEDCP). A spacer region spans residues 686 to 837 (SKQSGSFRKF…LRRRPWVGRK (152 aa)).

As to quaternary structure, interacts with SRPX2. Zn(2+) is required as a cofactor. The precursor is cleaved by a furin endopeptidase. In terms of processing, glycosylated. Can be O-fucosylated by POFUT2 on a serine or a threonine residue found within the consensus sequence C1-X(2)-(S/T)-C2-G of the TSP type-1 repeat domains where C1 and C2 are the first and second cysteine residue of the repeat, respectively. Fucosylated repeats can then be further glycosylated by the addition of a beta-1,3-glucose residue by the glucosyltransferase, B3GALTL. Fucosylation mediates the efficient secretion of ADAMTS family members. Can also be C-glycosylated with one or two mannose molecules on tryptophan residues within the consensus sequence W-X-X-W of the TPRs, and N-glycosylated. These other glycosylations can also facilitate secretion.

It is found in the secreted. The protein localises to the extracellular space. It localises to the extracellular matrix. The enzyme catalyses Glutamyl endopeptidase. Bonds cleaved include 370-Thr-Glu-Gly-Glu-|-Ala-Arg-Gly-Ser-377 in the interglobular domain of mammalian aggrecan.. In terms of biological role, cleaves aggrecan, a cartilage proteoglycan, at the '392-Glu-|-Ala-393' site and may be involved in its turnover. Also cleaves COMP. May play an important role in the destruction of aggrecan in arthritic diseases. The chain is A disintegrin and metalloproteinase with thrombospondin motifs 4 (ADAMTS4) from Pongo abelii (Sumatran orangutan).